The sequence spans 835 residues: Cap-specific mRNA (nucleoside-2'-O-)-methyltransferase 1 (835 aa).

A disordered region spans residues 1-67 (MKRRTDPECT…EGKQHSSDSF (67 aa)). Positions 2–19 (KRRTDPECTAPIKKQKKR) match the Bipartite nuclear localization signal motif. Ser28, Ser31, Ser53, Ser66, and Ser91 each carry phosphoserine. The segment covering 37 to 54 (SSVSHGAKASTTSLSGSD) has biased composition (polar residues). Over residues 57-67 (TEGKQHSSDSF) the composition is skewed to basic and acidic residues. Residues 87–133 (YNSVSQKLMAKMGFREGEGLGKYSQGRKDIVEASSQKGRRGLGLTLR) enclose the G-patch domain. Lys108 is subject to N6-acetyllysine. Substrate contacts are provided by residues 203 to 207 (KSVFD) and Arg218. Residues 231 to 450 (FFLNRAAMKM…ERYVVCKGLK (220 aa)) enclose the RrmJ-type SAM-dependent 2'-O-MTase domain. Asn234 serves as a coordination point for S-adenosyl-L-methionine. Lys239 is a catalytic residue. Residues 277-283 (CAGPGGF) and 335-336 (DI) contribute to the S-adenosyl-L-methionine site. Asp364 is a catalytic residue. 374-376 (NLQ) serves as a coordination point for substrate. Catalysis depends on Lys404, which acts as the Proton acceptor. Substrate is bound at residue Asn439. The interaction with POLR2A stretch occupies residues 727–835 (SSGTPKLSYT…VLSFIQMHRA (109 aa)). A WW domain is found at 752-786 (RTVNEPWTMGFSKSFKKKFFYNKKTKDSTFDLPAD).

As to quaternary structure, interacts with POLR2A (via C-terminus).

It localises to the nucleus. It catalyses the reaction a 5'-end (N(7)-methyl 5'-triphosphoguanosine)-ribonucleoside in mRNA + S-adenosyl-L-methionine = a 5'-end (N(7)-methyl 5'-triphosphoguanosine)-(2'-O-methyl-ribonucleoside) in mRNA + S-adenosyl-L-homocysteine + H(+). S-adenosyl-L-methionine-dependent methyltransferase that mediates mRNA cap1 2'-O-ribose methylation to the 5'-cap structure of mRNAs. Methylates the ribose of the first nucleotide of a m(7)GpppG-capped mRNA and small nuclear RNA (snRNA) to produce m(7)GpppRm (cap1). Displays a preference for cap0 transcripts. Cap1 modification is linked to higher levels of translation. May be involved in the interferon response pathway. The protein is Cap-specific mRNA (nucleoside-2'-O-)-methyltransferase 1 (CMTR1) of Homo sapiens (Human).